Consider the following 173-residue polypeptide: Calcium-binding protein 5 (173 aa).

EF-hand domains are found at residues 28–63, 82–99, 105–140, and 142–173; these read DELD…MGYM, GRVD…KLLA, IGVQ…LLGE, and LTPR…MMSR. The Ca(2+) site is built by D41, D43, D45, and D52. Ca(2+)-binding residues include D118, N120, D122, E124, E129, D155, N157, D159, T161, and E166.

As to quaternary structure, interacts with CACNA1C (via C-terminal CDB motif) in a calcium-dependent manner. Interacts with STXBP1. Interacts with MYO6. In terms of tissue distribution, expressed in inner and outer plexiform layers of the retina, and retinal bipolar cells (at protein level). Expressed in the inner hair cells (IHC) of the cochlea.

It is found in the cytoplasm. In terms of biological role, inhibits calcium-dependent inactivation of L-type calcium channel and shifts voltage dependence of activation to more depolarized membrane potentials. Involved in the transmission of light signals. May positively regulate neurotransmitter vesicle endocytosis and exocytosis in a salt-dependent manner. May play a role in the extension and network organization of neurites. This chain is Calcium-binding protein 5 (Cabp5), found in Mus musculus (Mouse).